A 233-amino-acid polypeptide reads, in one-letter code: ATP-dependent dethiobiotin synthetase BioD (233 aa).

12–17 (GVGKTI) provides a ligand contact to ATP. Thr16 contributes to the Mg(2+) binding site. Lys37 is an active-site residue. Ser41 provides a ligand contact to substrate. Residues Asp51, 112–115 (EGAG), and 202–204 (PKL) each bind ATP. Mg(2+)-binding residues include Asp51 and Glu112.

This sequence belongs to the dethiobiotin synthetase family. In terms of assembly, homodimer. Requires Mg(2+) as cofactor.

It is found in the cytoplasm. It catalyses the reaction (7R,8S)-7,8-diammoniononanoate + CO2 + ATP = (4R,5S)-dethiobiotin + ADP + phosphate + 3 H(+). It functions in the pathway cofactor biosynthesis; biotin biosynthesis; biotin from 7,8-diaminononanoate: step 1/2. Catalyzes a mechanistically unusual reaction, the ATP-dependent insertion of CO2 between the N7 and N8 nitrogen atoms of 7,8-diaminopelargonic acid (DAPA, also called 7,8-diammoniononanoate) to form a ureido ring. The polypeptide is ATP-dependent dethiobiotin synthetase BioD (Bacillus velezensis (strain DSM 23117 / BGSC 10A6 / LMG 26770 / FZB42) (Bacillus amyloliquefaciens subsp. plantarum)).